Here is a 114-residue protein sequence, read N- to C-terminus: Ribonuclease P protein component (114 aa).

Belongs to the RnpA family. As to quaternary structure, consists of a catalytic RNA component (M1 or rnpB) and a protein subunit.

It carries out the reaction Endonucleolytic cleavage of RNA, removing 5'-extranucleotides from tRNA precursor.. Its function is as follows. RNaseP catalyzes the removal of the 5'-leader sequence from pre-tRNA to produce the mature 5'-terminus. It can also cleave other RNA substrates such as 4.5S RNA. The protein component plays an auxiliary but essential role in vivo by binding to the 5'-leader sequence and broadening the substrate specificity of the ribozyme. The chain is Ribonuclease P protein component from Buchnera aphidicola subsp. Schizaphis graminum (strain Sg).